Here is a 419-residue protein sequence, read N- to C-terminus: Protein FAM217A (419 aa).

4 disordered regions span residues 1–23 (MGRK…QENL), 100–119 (DKRN…LSES), 234–298 (PSSS…SRSL), and 362–388 (PIPL…HRKS). A compositionally biased stretch (polar residues) spans 7–23 (ESCSANPHSSSISQENL). Positions 284–298 (SLSTAGKSKSNSRSL) are enriched in polar residues. Positions 378–388 (PRTKKKCHRKS) are enriched in basic residues.

The protein belongs to the FAM217 family.

This is Protein FAM217A (Fam217a) from Rattus norvegicus (Rat).